The primary structure comprises 455 residues: Tubby-like F-box protein 1 (455 aa).

Residues 54–112 (ETPWANLPPELLRDVIKRLEESESVWPARRHVVACASVCRSWRDMCKEIVQSPELSGKI) enclose the F-box domain. Residues 386–414 (QPQPQPQPQPQPQPLTQPQPSGQTDGPDK) form a disordered region. Residues 388 to 402 (QPQPQPQPQPQPLTQ) show a composition bias toward pro residues.

This sequence belongs to the TUB family. As to expression, ubiquitous.

The sequence is that of Tubby-like F-box protein 1 from Arabidopsis thaliana (Mouse-ear cress).